Here is a 69-residue protein sequence, read N- to C-terminus: Conotoxin Eb6.14 (69 aa).

Positions 1 to 17 (VLIIAVLFLTACQLTTA) are cleaved as a signal peptide. Residues 18–41 (ETYSRGRQKHRARRSTDKNSKWTR) constitute a propeptide that is removed on maturation. Intrachain disulfides connect C43/C57, C50/C61, and C56/C68.

This sequence belongs to the conotoxin O1 superfamily. Expressed by the venom duct.

The protein resides in the secreted. The polypeptide is Conotoxin Eb6.14 (E1) (Conus ebraeus (Hebrew cone)).